The following is a 172-amino-acid chain: Photosystem I assembly protein Ycf3 (172 aa).

TPR repeat units follow at residues 35–68, 72–105, and 120–153; these read AFSYYRDGMSAQSEGEYAEALENYYEALRLEEDP, SYILYNIGLIYASNGEYVKALEYYHQALDLNSQL, and GVKASEKKELDLARTLFDKAAEYWKQAIRLSPNN.

The protein belongs to the Ycf3 family.

The protein localises to the plastid. Its subcellular location is the chloroplast thylakoid membrane. In terms of biological role, essential for the assembly of the photosystem I (PSI) complex. May act as a chaperone-like factor to guide the assembly of the PSI subunits. This Guillardia theta (Cryptophyte) protein is Photosystem I assembly protein Ycf3.